The sequence spans 740 residues: MAAFSEMGVMPEIAQAVEEMDWLLPTDIQAESIPLILGGGDVLMAAETGSGKTGAFSIPVIQIVYETLKDQMEGKKGKATIKTGGAVLNKWQMNPYDRGSAFAIGSDGLCCQSREVKEWHGCRATRGVTKGKYYYEVSCHDQGLCRVGWSTMQASLDLGTDKFGFGFGGTGKKSHNKQFDSYGEEFTMHDTIGCYLDIDKGQIKFSKNGKDLGLAFEFPPHIRNQALFAACVLKNAELKFNFGEEDFKFPPKDGYIGLCKAPDGNVVKSQHTGNAQVVQTQNLPNAPKALIVEPSRELAEQTLNNVKQFKKYIDNPKLRELLIIGGVAARDQLSVLEQGVDIVVGTPGRLDDLVSTGKLNLSQVRFLVLDEADGLLLQGYSDFINRIHSQIPQITSDGKRLQVIVCSATLHSFDVKKLSEKIMHFPTWVDLKGEDSVPETVHHVVVIVNPKTDKLWERLGKNHIRTDEVHAKDNTLPGANTPEMWSEAIKILKGEYTVRAIKEHKMDQAIIFCRTKIDCDNMEQYFIQQGGGPDRKGHQFSCVCLHGDRKPQERKQNLERFKRGDVRFLICTDVAARGIDIHGVPYVINVTLPDEKQNYVHRIGRVGRAERMGLAISLVAKEKEKVWYHVCSSRGKGCYNTRLKEEGGCTIWYNEMQLLGEIEEHLNCTISQVEPDIKVPVDDFDGKVTYGQKRALGGGLYKGHVDILAPTVQELAALEKEAQTSFLHLGYLPNQLFRTF.

Positions 1–448 (MAAFSEMGVM…ETVHHVVVIV (448 aa)) are interaction with dsRNA. Residues 2 to 428 (AAFSEMGVMP…SEKIMHFPTW (427 aa)) form the Helicase ATP-binding domain. 46–53 (AETGSGKT) contributes to the ATP binding site. The region spanning 70–247 (DQMEGKKGKA…LKFNFGEEDF (178 aa)) is the B30.2/SPRY domain. A DEAD box motif is present at residues 370 to 373 (DEAD). The Helicase C-terminal domain maps to 493 to 681 (KGEYTVRAIK…QVEPDIKVPV (189 aa)).

The protein belongs to the DEAD box helicase family. DDX1 subfamily. As to expression, detected in embryonic retina, brain, heart and liver (at protein level). Detected in embryonic retina, brain, heart, kidney and liver.

It is found in the nucleus. The protein resides in the cytoplasm. Its subcellular location is the cytoplasmic granule. It localises to the cytosol. The protein localises to the mitochondrion. The enzyme catalyses ATP + H2O = ADP + phosphate + H(+). Its function is as follows. Acts as an ATP-dependent RNA helicase, able to unwind both RNA-RNA and RNA-DNA duplexes. Possesses 5' single-stranded RNA overhang nuclease activity. Acts as a positive regulator of transcription. May be involved in 3'-end cleavage and polyadenylation of pre-mRNAs. Binds DNA and RNA. Component of the tRNA-splicing ligase complex required to facilitate the enzymatic turnover of catalytic subunit RTCB. Binds (via helicase ATP-binding domain) on both short and long poly(I:C) dsRNA. In Gallus gallus (Chicken), this protein is ATP-dependent RNA helicase DDX1 (DDX1).